A 181-amino-acid polypeptide reads, in one-letter code: Photosystem I assembly protein Ycf4 (181 aa).

The next 2 membrane-spanning stretches (helical) occupy residues 19 to 39 and 62 to 82; these read YFWAFFLLVGGLGFLLAGISS and VMMFYGALSLGISIYTLLTII.

This sequence belongs to the Ycf4 family.

It localises to the plastid. It is found in the chloroplast thylakoid membrane. In terms of biological role, seems to be required for the assembly of the photosystem I complex. The sequence is that of Photosystem I assembly protein Ycf4 from Phaeodactylum tricornutum (strain CCAP 1055/1).